A 240-amino-acid polypeptide reads, in one-letter code: Endonuclease V (240 aa).

Mg(2+)-binding residues include D46 and D116.

It belongs to the endonuclease V family. The cofactor is Mg(2+).

The protein resides in the cytoplasm. It carries out the reaction Endonucleolytic cleavage at apurinic or apyrimidinic sites to products with a 5'-phosphate.. DNA repair enzyme involved in the repair of deaminated bases. Selectively cleaves double-stranded DNA at the second phosphodiester bond 3' to a deoxyinosine leaving behind the intact lesion on the nicked DNA. The polypeptide is Endonuclease V (Rhodospirillum centenum (strain ATCC 51521 / SW)).